The chain runs to 245 residues: Geranylgeranylglyceryl phosphate synthase (245 aa).

Positions 22 and 51 each coordinate Mg(2+). Residues 169–175, 200–201, and 222–223 each bind sn-glycerol 1-phosphate; these read YLEAGSG, GG, and GT.

Belongs to the GGGP/HepGP synthase family. Group II subfamily. Homotetramer. Homohexamer. Mg(2+) is required as a cofactor.

It localises to the cytoplasm. It catalyses the reaction sn-glycerol 1-phosphate + (2E,6E,10E)-geranylgeranyl diphosphate = sn-3-O-(geranylgeranyl)glycerol 1-phosphate + diphosphate. It functions in the pathway membrane lipid metabolism; glycerophospholipid metabolism. In terms of biological role, prenyltransferase that catalyzes the transfer of the geranylgeranyl moiety of geranylgeranyl diphosphate (GGPP) to the C3 hydroxyl of sn-glycerol-1-phosphate (G1P). This reaction is the first ether-bond-formation step in the biosynthesis of archaeal membrane lipids. This is Geranylgeranylglyceryl phosphate synthase from Methanothermobacter thermautotrophicus (strain ATCC 29096 / DSM 1053 / JCM 10044 / NBRC 100330 / Delta H) (Methanobacterium thermoautotrophicum).